We begin with the raw amino-acid sequence, 397 residues long: MALTMSAKSVSARAQVSSKAQAAPAVAVSGRTSSRVMPAPALAARSSVARTPLVVCAATATAPSPSLADKFKPNAIARVPATQQKQTAIITGASSGLGLNAAKALAATGEWHVVMACRDFLKAEQAAKKVGMPAGSYSILHLDLSSLESVRQFVQNFKASGRRLDALVCNAAVYLPTAKEPRFTADGFELSVGTNHLGHFLLTNLLLDDLKNAPNKQPRCIIVGSITGNTNTLAGNVPPKANLGDLSGLAAGVPAANPMMDGQEFNGAKAYKDSKVACMMTVRQMHQRFHDATGITFASLYPGCIAETGLFREHVPLFKTLFPPFQKYITKGYVSEEEAGRRLAAVISDPKLNKSGAYWSWSSTTGSFDNQVSEEVADDSKASKLWDISAKLVGLSA.

A chloroplast-targeting transit peptide spans 1 to 57 (MALTMSAKSVSARAQVSSKAQAAPAVAVSGRTSSRVMPAPALAARSSVARTPLVVCA).

The protein belongs to the short-chain dehydrogenases/reductases (SDR) family. POR subfamily.

It is found in the plastid. The protein localises to the chloroplast. The enzyme catalyses chlorophyllide a + NADP(+) = protochlorophyllide a + NADPH + H(+). Its pathway is porphyrin-containing compound metabolism; chlorophyll biosynthesis. In terms of biological role, phototransformation of protochlorophyllide (Pchlide) to chlorophyllide (Chlide). This chain is Protochlorophyllide reductase, chloroplastic (PORA), found in Chlamydomonas reinhardtii (Chlamydomonas smithii).